Reading from the N-terminus, the 430-residue chain is UDP-glucose 6-dehydrogenase AglM (430 aa).

The active site involves Cys269.

It belongs to the UDP-glucose/GDP-mannose dehydrogenase family.

The enzyme catalyses UDP-alpha-D-glucose + 2 NAD(+) + H2O = UDP-alpha-D-glucuronate + 2 NADH + 3 H(+). It functions in the pathway nucleotide-sugar biosynthesis; UDP-alpha-D-glucuronate biosynthesis; UDP-alpha-D-glucuronate from UDP-alpha-D-glucose: step 1/1. The protein operates within cell surface structure biogenesis; S-layer biogenesis. Activity improves as salinity decreases. In terms of biological role, involved in the assembly of a N-linked pentasaccharide that decorates the S-layer glycoprotein and flagellins. Involved in the biosynthesis of the hexuronic acids found at both positions 2 and 3 of the pentasaccharide. This is UDP-glucose 6-dehydrogenase AglM (aglM) from Haloferax volcanii (strain ATCC 29605 / DSM 3757 / JCM 8879 / NBRC 14742 / NCIMB 2012 / VKM B-1768 / DS2) (Halobacterium volcanii).